The following is a 563-amino-acid chain: Autotransporter BimA (563 aa).

Residues 1 to 20 (MKYRRLSLAHARQDSGQAAS) are disordered. Residues 1 to 48 (MKYRRLSLAHARQDSGQAASNARSRRFARLLCSSIAPLALGFSADAFA) form the signal peptide. A surface exposed passenger domain region spans residues 61–472 (APNDAHGNLL…NLAISNSNAY (412 aa)). A WH2 domain is found at 65–82 (AHGNLLDEIRRGVPLRHV). Residues 96–130 (TLADAMRRVIDSRRTAFDSPPATPASPSPSWSDDE) are central and acidic domains. Residues 109-350 (RTAFDSPPAT…PARPGGGQFT (242 aa)) form a disordered region. Low complexity-rich tracts occupy residues 138-150 (ATRP…SAAR), 162-197 (PASA…STPR), and 211-227 (SPAA…AHSR). 2 stretches are compositionally biased toward polar residues: residues 228 to 238 (GSTQPPSNLST) and 269 to 281 (SRGS…NLST). The tract at residues 473 to 509 (TNQRIGDLQQSITETARDAYSGVAAATALTMIPDVDR) is outer membrane translocation of the passenger domain. 4 consecutive transmembrane segments (beta stranded) span residues 510–519 (DKMLSIGVGG), 525–536 (HRAVALGGTARI), 543–549 (RAGVAMS), and 553–563 (NTVGVGMSWQW). The tract at residues 510-563 (DKMLSIGVGGAVYKGHRAVALGGTARIGENLKVRAGVAMSAGGNTVGVGMSWQW) is translocator domain.

This sequence belongs to the autotransporter-2 (AT-2) (TC 1.B.40) family. In terms of assembly, homotrimer. Interacts with host G-actin; the interaction is direct. Interacts (via central and acidic domains) with host ACTR2/ARP2 and ACTR3/ARP3.

The protein resides in the cell outer membrane. It is found in the cell surface. Its function is as follows. During host cell infection, required for actin-based intracellular motility. Mediates actin tail formation at one pole of the bacteria surface by recruiting host Arp2/3 (ACTR3/ARP3-ACTR2/ARP2) which leads to actin polymerization which provides the propulsive force for intracellular movement and intercellular dissemination of the bacterium. The protein is Autotransporter BimA of Burkholderia thailandensis (strain ATCC 700388 / DSM 13276 / CCUG 48851 / CIP 106301 / E264).